A 308-amino-acid chain; its full sequence is UDP-N-acetylenolpyruvoylglucosamine reductase (308 aa).

The 164-residue stretch at 22–185 (RVGGPADWLF…TEATFRAEAG (164 aa)) folds into the FAD-binding PCMH-type domain. Arg165 is a catalytic residue. The span at 197-211 (QIARRDSSQPTKERS) shows a compositional bias: basic and acidic residues. The disordered stretch occupies residues 197-228 (QIARRDSSQPTKERSAGSTFRNPAGFSSTGRA). The span at 212–226 (AGSTFRNPAGFSSTG) shows a compositional bias: polar residues. Ser214 acts as the Proton donor in catalysis. Glu296 is a catalytic residue.

This sequence belongs to the MurB family. Requires FAD as cofactor.

Its subcellular location is the cytoplasm. It catalyses the reaction UDP-N-acetyl-alpha-D-muramate + NADP(+) = UDP-N-acetyl-3-O-(1-carboxyvinyl)-alpha-D-glucosamine + NADPH + H(+). It participates in cell wall biogenesis; peptidoglycan biosynthesis. Its function is as follows. Cell wall formation. The protein is UDP-N-acetylenolpyruvoylglucosamine reductase of Cereibacter sphaeroides (strain ATCC 17023 / DSM 158 / JCM 6121 / CCUG 31486 / LMG 2827 / NBRC 12203 / NCIMB 8253 / ATH 2.4.1.) (Rhodobacter sphaeroides).